The sequence spans 145 residues: DnaJ homolog subfamily B member 3 (145 aa).

Positions 1–69 (MVDYYEVLDV…KKRDIYDRYG (69 aa)) constitute a J domain.

Expressed in sperm (at protein level).

May operate as a co-chaperone of the male germ cell- and haploid stage-specific Hsp70 proteins. The protein is DnaJ homolog subfamily B member 3 (DNAJB3) of Homo sapiens (Human).